Here is a 391-residue protein sequence, read N- to C-terminus: Probable inactive allantoicase (391 aa).

Belongs to the allantoicase family.

The function of this enzyme is unclear as allantoicase activity is not known to exist in mammals. The sequence is that of Probable inactive allantoicase from Homo sapiens (Human).